Here is a 514-residue protein sequence, read N- to C-terminus: Glutamyl-tRNA(Gln) amidotransferase subunit B, mitochondrial (514 aa).

The protein belongs to the GatB/GatE family. GatB subfamily. In terms of assembly, subunit of the heterotrimeric GatCAB amidotransferase (AdT) complex, composed of A, B and C subunits.

The protein resides in the mitochondrion. The enzyme catalyses L-glutamyl-tRNA(Gln) + L-glutamine + ATP + H2O = L-glutaminyl-tRNA(Gln) + L-glutamate + ADP + phosphate + H(+). Allows the formation of correctly charged Gln-tRNA(Gln) through the transamidation of misacylated Glu-tRNA(Gln) in the mitochondria. The reaction takes place in the presence of glutamine and ATP through an activated gamma-phospho-Glu-tRNA(Gln). The chain is Glutamyl-tRNA(Gln) amidotransferase subunit B, mitochondrial from Naegleria gruberi (Amoeba).